We begin with the raw amino-acid sequence, 561 residues long: Oligo-1,6-glucosidase 1 (561 aa).

Ca(2+)-binding residues include Asp-20, Asn-22, Asp-24, Phe-26, and Asp-28. The active-site Nucleophile is the Asp-199. Glu-255 acts as the Proton donor in catalysis.

It belongs to the glycosyl hydrolase 13 family.

The protein localises to the cytoplasm. It catalyses the reaction Hydrolysis of (1-&gt;6)-alpha-D-glucosidic linkages in some oligosaccharides produced from starch and glycogen by alpha-amylase, and in isomaltose.. Its function is as follows. Hydrolyzes various disaccharides such as sucrose, maltose, and isomaltose with different efficiencies. Also hydrolyzes longer maltodextrins from maltotriose up to maltohexaose, but not maltoheptaose, palatinose, isomaltotriose, or isomaltotetraose. In Bacillus subtilis (strain 168), this protein is Oligo-1,6-glucosidase 1 (malL).